A 177-amino-acid chain; its full sequence is MSAKLNWYRITFNDTVWRFDTARGPKDGETCPLIASELFSSGLSEVFKSVTSFSEILRNMESRGYITNITLRADSDILGPGALRCEFLFPSEVFIPTSHTLKMGRSSLILEPHLVVLKECKYISSGKLDIGISSIEATSVAVLRRVKGPAFIGCMDDNPFGVLTKKPSDEKNVLASK.

Homomultimer. Interacts with nucleoprotein and with the cytoplasmic domain of glycoprotein.

It is found in the virion membrane. The protein localises to the host endomembrane system. In terms of biological role, plays a major role in assembly and budding of virion. Completely covers the ribonucleoprotein coil and keep it in condensed bullet-shaped form. Inhibits viral transcription and stimulates replication. The chain is Matrix protein (M) from Lettuce necrotic yellows virus (isolate 318) (LNYV).